A 293-amino-acid chain; its full sequence is N-acetylneuraminate lyase (293 aa).

Ser-48 and Ser-49 together coordinate aceneuramate. Tyr-137 acts as the Proton donor in catalysis. Residue Lys-165 is the Schiff-base intermediate with substrate of the active site. Residues Thr-167, Gly-189, Asp-191, Glu-192, and Ser-208 each contribute to the aceneuramate site.

This sequence belongs to the DapA family. NanA subfamily. As to quaternary structure, homotetramer.

The protein localises to the cytoplasm. It carries out the reaction aceneuramate = aldehydo-N-acetyl-D-mannosamine + pyruvate. The protein operates within amino-sugar metabolism; N-acetylneuraminate degradation; D-fructose 6-phosphate from N-acetylneuraminate: step 1/5. In terms of biological role, catalyzes the reversible aldol cleavage of N-acetylneuraminic acid (sialic acid; Neu5Ac) to form pyruvate and N-acetylmannosamine (ManNAc) via a Schiff base intermediate. The sequence is that of N-acetylneuraminate lyase from Staphylococcus aureus (strain Mu3 / ATCC 700698).